We begin with the raw amino-acid sequence, 403 residues long: 3-oxoacyl-[acyl-carrier-protein] synthase 2 (403 aa).

Residues 1–403 (VITGMGALSP…GGHNAVLVFK (403 aa)) enclose the Ketosynthase family 3 (KS3) domain. Catalysis depends on for beta-ketoacyl synthase activity residues Cys-158, His-297, and His-334.

The protein belongs to the thiolase-like superfamily. Beta-ketoacyl-ACP synthases family.

The enzyme catalyses a fatty acyl-[ACP] + malonyl-[ACP] + H(+) = a 3-oxoacyl-[ACP] + holo-[ACP] + CO2. The catalysed reaction is (9Z)-hexadecenoyl-[ACP] + malonyl-[ACP] + H(+) = 3-oxo-(11Z)-octadecenoyl-[ACP] + holo-[ACP] + CO2. It functions in the pathway lipid metabolism; fatty acid biosynthesis. Its function is as follows. Involved in the type II fatty acid elongation cycle. Catalyzes the elongation of a wide range of acyl-ACP by the addition of two carbons from malonyl-ACP to an acyl acceptor. Can efficiently catalyze the conversion of palmitoleoyl-ACP (cis-hexadec-9-enoyl-ACP) to cis-vaccenoyl-ACP (cis-octadec-11-enoyl-ACP), an essential step in the thermal regulation of fatty acid composition. The polypeptide is 3-oxoacyl-[acyl-carrier-protein] synthase 2 (fabF) (Staphylococcus aureus).